A 469-amino-acid chain; its full sequence is Mitochondrial adenyl nucleotide antiporter SLC25A25 (469 aa).

The tract at residues 1-165 is regulatory N-terminal domain; sequence MLCLCLYVPI…LYWKHSTIFD (165 aa). The Mitochondrial intermembrane segment spans residues 1–189; it reads MLCLCLYVPI…ERQTGMWWRH (189 aa). EF-hand domains follow at residues 47 to 80, 78 to 113, and 114 to 149; these read TYRQ…QDHE, DHEK…LGVK, and ISEQ…HPVE. Residues D60, D62, D64, Q66, and E71 each coordinate Ca(2+). A linker region region spans residues 151–160; that stretch reads IPEIILYWKH. A C-terminal transmembrane transporter domain region spans residues 166–469; sequence VGENLTVPDE…LKITLGVQSR (304 aa). Solcar repeat units lie at residues 184 to 270, 278 to 363, and 375 to 463; these read GMWW…MKRL, LRIH…LKNT, and PGVF…LKIT. Residues 190 to 207 traverse the membrane as a helical segment; the sequence is LVAGGGAGAVSRTCTAPL. The Mitochondrial matrix portion of the chain corresponds to 208–244; it reads DRLKVLMQVHASRSNNMCIVGGFTQMIREGGAKSLWR. Residues 245-264 form a helical membrane-spanning segment; it reads GNGINVLKIAPESAIKFMAY. Topologically, residues 265–287 are mitochondrial intermembrane; that stretch reads EQMKRLVGSDQETLRIHERLVAG. The helical transmembrane segment at 288 to 301 threads the bilayer; the sequence is SLAGAIAQSSIYPM. Residues 302 to 337 are Mitochondrial matrix-facing; it reads EVLKTRMALRKTGQYSGMLDCARRILAKEGVAAFYK. A helical membrane pass occupies residues 338 to 357; it reads GYIPNMLGIIPYAGIDLAVY. Residues 358 to 380 are Mitochondrial intermembrane-facing; the sequence is ETLKNTWLQRYAVNSADPGVFVL. Residues 381 to 398 traverse the membrane as a helical segment; it reads LACGTISSTCGQLASYPL. Over 399 to 437 the chain is Mitochondrial matrix; that stretch reads ALVRTRMQAQASIEGAPEVTMSSLFKQILRTEGAFGLYR. Residues 438 to 457 traverse the membrane as a helical segment; sequence GLAPNFMKVIPAVSISYVVY. The Mitochondrial intermembrane portion of the chain corresponds to 458-469; it reads ENLKITLGVQSR.

The protein belongs to the mitochondrial carrier (TC 2.A.29) family.

Its subcellular location is the mitochondrion inner membrane. It catalyses the reaction Mg(2+)(out) + phosphate(in) + ATP(out) = Mg(2+)(in) + phosphate(out) + ATP(in). With respect to regulation, activated by an increase in cytosolic calcium levels that induce a conformational change of the N-terminal regulatory domain, uncapping the channel and allowing transport. In terms of biological role, electroneutral antiporter that most probably mediates the transport of adenyl nucleotides through the inner mitochondrial membrane. Originally identified as an ATP-magnesium/inorganic phosphate antiporter, it could have a broader specificity for adenyl nucleotides. By regulating the mitochondrial matrix adenyl nucleotide pool could adapt to changing cellular energetic demands and indirectly regulate adenyl nucleotide-dependent metabolic pathways. The protein is Mitochondrial adenyl nucleotide antiporter SLC25A25 of Mus musculus (Mouse).